The sequence spans 1391 residues: DNA-directed RNA polymerase subunit beta (1391 aa).

Belongs to the RNA polymerase beta chain family. As to quaternary structure, the RNAP catalytic core consists of 2 alpha, 1 beta, 1 beta' and 1 omega subunit. When a sigma factor is associated with the core the holoenzyme is formed, which can initiate transcription.

It catalyses the reaction RNA(n) + a ribonucleoside 5'-triphosphate = RNA(n+1) + diphosphate. Its function is as follows. DNA-dependent RNA polymerase catalyzes the transcription of DNA into RNA using the four ribonucleoside triphosphates as substrates. In Mycoplasma pneumoniae (strain ATCC 29342 / M129 / Subtype 1) (Mycoplasmoides pneumoniae), this protein is DNA-directed RNA polymerase subunit beta.